The following is a 365-amino-acid chain: UDP-N-acetylglucosamine--N-acetylmuramyl-(pentapeptide) pyrophosphoryl-undecaprenol N-acetylglucosamine transferase (365 aa).

UDP-N-acetyl-alpha-D-glucosamine-binding positions include 17-19 (TGG), Asn129, Arg167, Ser194, Ile250, 269-274 (ALTVSE), and Gln295.

The protein belongs to the glycosyltransferase 28 family. MurG subfamily.

The protein localises to the cell inner membrane. It catalyses the reaction di-trans,octa-cis-undecaprenyl diphospho-N-acetyl-alpha-D-muramoyl-L-alanyl-D-glutamyl-meso-2,6-diaminopimeloyl-D-alanyl-D-alanine + UDP-N-acetyl-alpha-D-glucosamine = di-trans,octa-cis-undecaprenyl diphospho-[N-acetyl-alpha-D-glucosaminyl-(1-&gt;4)]-N-acetyl-alpha-D-muramoyl-L-alanyl-D-glutamyl-meso-2,6-diaminopimeloyl-D-alanyl-D-alanine + UDP + H(+). The protein operates within cell wall biogenesis; peptidoglycan biosynthesis. Functionally, cell wall formation. Catalyzes the transfer of a GlcNAc subunit on undecaprenyl-pyrophosphoryl-MurNAc-pentapeptide (lipid intermediate I) to form undecaprenyl-pyrophosphoryl-MurNAc-(pentapeptide)GlcNAc (lipid intermediate II). The protein is UDP-N-acetylglucosamine--N-acetylmuramyl-(pentapeptide) pyrophosphoryl-undecaprenol N-acetylglucosamine transferase of Shewanella pealeana (strain ATCC 700345 / ANG-SQ1).